A 257-amino-acid chain; its full sequence is Snake venom serine protease Haly-2 (257 aa).

The N-terminal stretch at 1-18 (MVLIRVLANLLILQLSYA) is a signal peptide. The propeptide occupies 19–24 (QKSSEL). The Peptidase S1 domain maps to 25–248 (IIGGDECNIN…HLEWIRSIIA (224 aa)). 6 cysteine pairs are disulfide-bonded: Cys31-Cys162, Cys49-Cys65, Cys97-Cys255, Cys141-Cys209, Cys173-Cys188, and Cys199-Cys224. Residue His64 is the Charge relay system of the active site. N-linked (GlcNAc...) asparagine glycosylation occurs at Asn100. Asp109 (charge relay system) is an active-site residue. The Charge relay system role is filled by Ser203.

Belongs to the peptidase S1 family. Snake venom subfamily. Monomer. As to expression, expressed by the venom gland.

The protein localises to the secreted. In terms of biological role, snake venom serine protease that may act in the hemostasis system of the prey. The chain is Snake venom serine protease Haly-2 from Gloydius brevicauda (Korean slamosa snake).